The sequence spans 179 residues: Large ribosomal subunit protein uL5 (179 aa).

The protein belongs to the universal ribosomal protein uL5 family. In terms of assembly, part of the 50S ribosomal subunit; part of the 5S rRNA/L5/L18/L25 subcomplex. Contacts the 5S rRNA and the P site tRNA. Forms a bridge to the 30S subunit in the 70S ribosome.

Its function is as follows. This is one of the proteins that bind and probably mediate the attachment of the 5S RNA into the large ribosomal subunit, where it forms part of the central protuberance. In the 70S ribosome it contacts protein S13 of the 30S subunit (bridge B1b), connecting the 2 subunits; this bridge is implicated in subunit movement. Contacts the P site tRNA; the 5S rRNA and some of its associated proteins might help stabilize positioning of ribosome-bound tRNAs. This chain is Large ribosomal subunit protein uL5, found in Marinobacter nauticus (strain ATCC 700491 / DSM 11845 / VT8) (Marinobacter aquaeolei).